A 704-amino-acid polypeptide reads, in one-letter code: Elongation factor G (704 aa).

The 283-residue stretch at E8–N290 folds into the tr-type G domain. Residues A17–T24, D88–H92, and N142–D145 each bind GTP.

Belongs to the TRAFAC class translation factor GTPase superfamily. Classic translation factor GTPase family. EF-G/EF-2 subfamily.

It localises to the cytoplasm. Functionally, catalyzes the GTP-dependent ribosomal translocation step during translation elongation. During this step, the ribosome changes from the pre-translocational (PRE) to the post-translocational (POST) state as the newly formed A-site-bound peptidyl-tRNA and P-site-bound deacylated tRNA move to the P and E sites, respectively. Catalyzes the coordinated movement of the two tRNA molecules, the mRNA and conformational changes in the ribosome. This Francisella tularensis subsp. holarctica (strain LVS) protein is Elongation factor G.